The chain runs to 310 residues: Ribosomal RNA small subunit methyltransferase H (310 aa).

S-adenosyl-L-methionine is bound by residues 32–34 (GGH), Asp52, Phe79, Asp100, and Gln107.

The protein belongs to the methyltransferase superfamily. RsmH family.

The protein resides in the cytoplasm. The enzyme catalyses cytidine(1402) in 16S rRNA + S-adenosyl-L-methionine = N(4)-methylcytidine(1402) in 16S rRNA + S-adenosyl-L-homocysteine + H(+). Specifically methylates the N4 position of cytidine in position 1402 (C1402) of 16S rRNA. This chain is Ribosomal RNA small subunit methyltransferase H, found in Bacillus cereus (strain B4264).